The following is a 708-amino-acid chain: Exocyst complex component 8 (708 aa).

A PH domain is found at 168–268 (YLVYNGDLLE…WLEVLEETKR (101 aa)). Positions 271–282 (ALSEKRRLEQEA) are enriched in basic and acidic residues. Residues 271 to 314 (ALSEKRRLEQEALPRPAPTPPESTNPFEEEEEEEEEPSAEEEAV) are disordered. Residues 297–314 (FEEEEEEEEEPSAEEEAV) show a composition bias toward acidic residues.

It belongs to the EXO84 family. In terms of assembly, the exocyst complex is composed of EXOC1, EXOC2, EXOC3, EXOC4, EXOC5, EXOC6, EXOC7 and EXOC8.

The protein localises to the cytoplasm. It localises to the perinuclear region. The protein resides in the cell projection. It is found in the growth cone. In terms of biological role, component of the exocyst complex involved in the docking of exocytic vesicles with fusion sites on the plasma membrane. The sequence is that of Exocyst complex component 8 (EXOC8) from Gallus gallus (Chicken).